A 241-amino-acid chain; its full sequence is Alpha/beta-tubulin-N-acetyltransferase 9 (241 aa).

The N-acetyltransferase domain maps to 34–181; the sequence is EELRHLTASE…VTLRLAVSEP (148 aa).

This sequence belongs to the acetyltransferase family. GNAT subfamily.

It catalyses the reaction N-terminal L-methionyl-[tubulin] + acetyl-CoA = N-terminal N(alpha)-acetyl-L-methionyl-[tubulin] + CoA + H(+). Its function is as follows. N-acetyltransferase that mediates the acetylation of the N-terminal residues of alpha- and beta-tubulin. This is Alpha/beta-tubulin-N-acetyltransferase 9 (Nat9) from Mus musculus (Mouse).